Consider the following 386-residue polypeptide: Short integuments 2, mitochondrial (386 aa).

A CP-type G domain is found at 37–207 (TRAIRNRLKL…VLDSPGVLVP (171 aa)). The DARXP motif signature appears at 55–59 (DARIP). The segment at 81–84 (NKKD) is G4. GTP-binding positions include 81-84 (NKKD), 109-110 (NA), and 146-151 (NVGKSA). The interval 109 to 111 (NAH) is G5. Positions 143-150 (GVPNVGKS) are G1. A G2 region spans residues 180–184 (GVTQD). Residues 200 to 203 (DSPG) are G3. A GTP-binding site is contributed by Gly203.

The protein belongs to the TRAFAC class YlqF/YawG GTPase family. MTG1 subfamily. Expressed in seedlings, roots, leaves, stems, inflorescences and siliques.

The protein localises to the mitochondrion. In terms of biological role, GTPase that may function in mitochondrial ribosome assembly. Involved in a variety of growth processes during vegetative development and promotes growth and cell division in the developing integuments. The protein is Short integuments 2, mitochondrial of Arabidopsis thaliana (Mouse-ear cress).